We begin with the raw amino-acid sequence, 195 residues long: Cytochrome b-245 light chain (195 aa).

Residues 2-7 (GQIEWA) are Cytoplasmic-facing. A helical transmembrane segment spans residues 8-30 (MWANEQALASGLILITGGIVATA). Over 31 to 35 (GRFTQ) the chain is Extracellular. A helical membrane pass occupies residues 36 to 53 (WYFGAYSIVAGVFVCLLE). At 54-69 (YPRGKRKKGSTMERWG) the chain is on the cytoplasmic side. An intramembrane segment occupies 70-80 (QKYMTAVVKLF). The Cytoplasmic segment spans residues 81–86 (GPFTRN). The chain crosses the membrane as a helical span at residues 87 to 104 (YYVRAVLHLLLSVPAGFL). Residue L105 is a topological domain, extracellular. The helical transmembrane segment at 106–126 (ATILGTACLAIASGIYLLAAV) threads the bilayer. Residues 127–195 (RGEQWTPIEP…NPIPVTDEVV (69 aa)) lie on the Cytoplasmic side of the membrane. The segment at 134 to 195 (IEPKPRERPQ…NPIPVTDEVV (62 aa)) is disordered. Position 147 is a phosphothreonine (T147). A Glycyl lysine isopeptide (Lys-Gly) (interchain with G-Cter in ubiquitin) cross-link involves residue K149. S168 carries the post-translational modification Phosphoserine.

The protein belongs to the p22phox family. As to quaternary structure, component of the phagocyte NADPH oxidase core complex/cytochrome b558 complex, composed of CYBB (heavy chain (beta)) and CYBA (light chain (alpha)). Component of the phagocyte NADPH oxidase complex composed of an obligatory core heterodimer formed by the membrane proteins CYBA and CYBB and the cytosolic regulatory subunits NCF1/p47-phox, NCF2/p67-phox, NCF4/p40-phox and the small GTPase RAC1 or RAC2. Interacts with NCF1 (via SH3 domain). Interacts with SH3PXD2A. Interacts with DUOX1, DUOX2 and TPO. Interacts with NOX4; this interaction mediates superoxide generation. Interacts with calprotectin (S100A8/9). Interacts with GBP7. Interacts with NOXO1. Forms a heterodimer with NOX3 and is essential for activity and cell membrane localization of NOX3. Interacts with NOX1. In terms of processing, phosphorylation at Thr-147 enhances NADPH oxidase activity by promoting NCF1/p47-phox binding. Ubiquitinated at Lys-149 likely by RNF145.

The protein localises to the cell membrane. In terms of biological role, subunit of NADPH oxidase complexes that is required for the NADPH oxidase activity that generates, in various cell types, superoxide from molecular oxygen utilizing NADPH as an electron donor. Subunit of the phagocyte NADPH oxidase complex that mediates the transfer of electrons from cytosolic NADPH to O2 to produce the superoxide anion (O2(-)). In the activated complex, electrons are first transferred from NADPH to flavin adenine dinucleotide (FAD) and subsequently transferred via two heme molecules to molecular oxygen, producing superoxide through an outer-sphere reaction. Activation of the NADPH oxidase complex is initiated by the assembly of cytosolic subunits of the NADPH oxidase complex with the core NADPH oxidase complex to form a complex at the plasma membrane or phagosomal membrane. This activation process is initiated by phosphorylation dependent binding of the cytosolic NCF1/p47-phox subunit to the C-terminus of CYBA/p22-phox. Aassociates with NOX3 to form a functional NADPH oxidase constitutively generating superoxide. This is Cytochrome b-245 light chain from Homo sapiens (Human).